Here is a 383-residue protein sequence, read N- to C-terminus: MAKVGEGDPRWIVENREDGHNVNGWHWSEKDCLPWSKNTIGGLFDKKVIQETDEYTFKISSTPVVSGECTANNRKGKTIFLYELDVKMNWEVVFKPKKVLPPPPTTKSKGAADDIDEEDDDGKPAEPIITQKKTISGEFTVPYISDENGDEAPTVRYTINTTADNDETKQSINMVQSLLKSHGVPFVQSQCQEFIKLLKKEFVSKKQVEQSQQQQTANTTTNTTTTTNTVPKVTSSTVIFNSTPTKKPTTKTLKLKEEFQCSPMDAYDVFVNINKLRAFTQSDCTFENEEGGKFSLYGGSIQGVNKTLSPGSKIVQTWRLDNWSKGVESQVTITFSVDGKPLTNVEIVQTGIPIDEFEKTEEGWKRNILDRIKHTFSYSSKIF.

Disordered stretches follow at residues 97-126 (KKVLPPPPTTKSKGAADDIDEEDDDGKPAE) and 209-228 (EQSQQQQTANTTTNTTTTTN).

This sequence belongs to the AHA1 family. As to quaternary structure, interacts with hspD/HSP90.

It is found in the cytoplasm. Co-chaperone that stimulates hspD/HSP90 ATPase activity. This Dictyostelium discoideum (Social amoeba) protein is Activator of 90 kDa heat shock protein ATPase homolog (ahsa).